Here is a 93-residue protein sequence, read N- to C-terminus: Pyrimidine/purine nucleoside phosphorylase (93 aa).

The protein belongs to the nucleoside phosphorylase PpnP family.

The enzyme catalyses a purine D-ribonucleoside + phosphate = a purine nucleobase + alpha-D-ribose 1-phosphate. The catalysed reaction is adenosine + phosphate = alpha-D-ribose 1-phosphate + adenine. It carries out the reaction cytidine + phosphate = cytosine + alpha-D-ribose 1-phosphate. It catalyses the reaction guanosine + phosphate = alpha-D-ribose 1-phosphate + guanine. The enzyme catalyses inosine + phosphate = alpha-D-ribose 1-phosphate + hypoxanthine. The catalysed reaction is thymidine + phosphate = 2-deoxy-alpha-D-ribose 1-phosphate + thymine. It carries out the reaction uridine + phosphate = alpha-D-ribose 1-phosphate + uracil. It catalyses the reaction xanthosine + phosphate = alpha-D-ribose 1-phosphate + xanthine. In terms of biological role, catalyzes the phosphorolysis of diverse nucleosides, yielding D-ribose 1-phosphate and the respective free bases. Can use uridine, adenosine, guanosine, cytidine, thymidine, inosine and xanthosine as substrates. Also catalyzes the reverse reactions. This is Pyrimidine/purine nucleoside phosphorylase from Marinobacter nauticus (strain ATCC 700491 / DSM 11845 / VT8) (Marinobacter aquaeolei).